The chain runs to 258 residues: Axonemal dynein light intermediate polypeptide 1 (258 aa).

Disordered stretches follow at residues 1-60 (MIPP…CVPD) and 202-231 (DLERQVNEQKAKCEATEKRESERRQVEEKK). Residues 176-255 (MRKALQAEQG…LKAQLEGIIA (80 aa)) are a coiled coil.

This sequence belongs to the inner dynein arm light chain family. As to quaternary structure, interacts with CFAP45. Interacts with DYNC1H1.

Its subcellular location is the cell projection. It is found in the cilium. The protein localises to the flagellum. It localises to the dynein axonemal particle. The protein resides in the cytoplasm. In terms of biological role, involved in sperm flagellum assembly. This is Axonemal dynein light intermediate polypeptide 1 from Rattus norvegicus (Rat).